A 443-amino-acid chain; its full sequence is Putative transporter AmpG 1 (443 aa).

12 helical membrane-spanning segments follow: residues 6–26 (HVCI…MITG), 43–63 (IGIL…APVF), 74–96 (ILGH…TSIL), 106–128 (VLLS…ILSA), 144–164 (GIYI…AIYL), 172–192 (KIYQ…ILVS), 255–275 (DISL…YRLP), 300–320 (VCKF…GIIM), 326–346 (LYSI…FILL), 355–375 (ILFI…TAYI), 394–414 (LSSM…YMVV), and 416–436 (FGWQ…LLIL).

The protein belongs to the major facilitator superfamily.

Its subcellular location is the cell inner membrane. The protein is Putative transporter AmpG 1 (ampG1) of Rickettsia typhi (strain ATCC VR-144 / Wilmington).